The following is a 394-amino-acid chain: Protein TsgA homolog (394 aa).

The next 12 helical transmembrane spans lie at 11–31, 51–71, 78–98, 101–121, 134–154, 162–182, 206–226, 250–270, 273–293, 297–317, 332–352, and 361–381; these read WISFFSYALTGALVIVTGMVM, FLNAGILISIFLNAWLMEIVP, FGFVLMVAAVAGLMVSHSIAL, VSMFVLGLVSGITMSIGTFLI, LLFTDSFFSMAGMIFPMVAAV, WYWVYACIGLVYVAIFVLTFG, IGVLFLSVAALCYILGQLGFI, FWMSYMFGMWAFSFILRFFDL, ILTVLAGLATVLMYLFINGAP, AWFILTLGFFSSAIYTSIITL, FVLTCGTIGTMLTFVVTGPIV, and LQTANGLYAVVFVMCLILGFV.

The protein belongs to the major facilitator superfamily. TsgA family.

The protein resides in the cell inner membrane. The sequence is that of Protein TsgA homolog from Enterobacter sp. (strain 638).